A 253-amino-acid polypeptide reads, in one-letter code: Ribulose bisphosphate carboxylase large chain (253 aa).

Residues Asn35 and Thr85 each coordinate substrate. The Proton acceptor role is filled by Lys87. Residue Lys89 coordinates substrate. 3 residues coordinate Mg(2+): Lys113, Asp115, and Glu116. Residue Lys113 is modified to N6-carboxylysine. The active-site Proton acceptor is the His206. 2 residues coordinate substrate: Arg207 and His239.

It belongs to the RuBisCO large chain family. Type I subfamily. Heterohexadecamer of 8 large chains and 8 small chains; disulfide-linked. The disulfide link is formed within the large subunit homodimers. Requires Mg(2+) as cofactor. In terms of processing, the disulfide bond which can form in the large chain dimeric partners within the hexadecamer appears to be associated with oxidative stress and protein turnover.

Its subcellular location is the plastid. It is found in the chloroplast. It catalyses the reaction 2 (2R)-3-phosphoglycerate + 2 H(+) = D-ribulose 1,5-bisphosphate + CO2 + H2O. The enzyme catalyses D-ribulose 1,5-bisphosphate + O2 = 2-phosphoglycolate + (2R)-3-phosphoglycerate + 2 H(+). In terms of biological role, ruBisCO catalyzes two reactions: the carboxylation of D-ribulose 1,5-bisphosphate, the primary event in carbon dioxide fixation, as well as the oxidative fragmentation of the pentose substrate in the photorespiration process. Both reactions occur simultaneously and in competition at the same active site. The sequence is that of Ribulose bisphosphate carboxylase large chain (rbcL) from Magnolia latahensis (Apocynophyllum latahense).